A 211-amino-acid polypeptide reads, in one-letter code: Cytochrome c biogenesis ATP-binding export protein CcmA (211 aa).

Positions 6-211 (LQTVALACER…RDIDLGNWAV (206 aa)) constitute an ABC transporter domain. 38-45 (GPNGSGKT) serves as a coordination point for ATP.

The protein belongs to the ABC transporter superfamily. CcmA exporter (TC 3.A.1.107) family. In terms of assembly, the complex is composed of two ATP-binding proteins (CcmA) and two transmembrane proteins (CcmB).

The protein localises to the cell inner membrane. It carries out the reaction heme b(in) + ATP + H2O = heme b(out) + ADP + phosphate + H(+). Its function is as follows. Part of the ABC transporter complex CcmAB involved in the biogenesis of c-type cytochromes; once thought to export heme, this seems not to be the case, but its exact role is uncertain. Responsible for energy coupling to the transport system. This Pseudomonas fluorescens (strain Pf0-1) protein is Cytochrome c biogenesis ATP-binding export protein CcmA.